A 98-amino-acid polypeptide reads, in one-letter code: NADH-ubiquinone oxidoreductase chain 4L (98 aa).

A run of 3 helical transmembrane segments spans residues 1-21 (MYSS…VNLI), 27-47 (FLMT…FVPI), and 61-81 (VILL…MVLM).

Belongs to the complex I subunit 4L family.

Its subcellular location is the mitochondrion membrane. It carries out the reaction a ubiquinone + NADH + 5 H(+)(in) = a ubiquinol + NAD(+) + 4 H(+)(out). Its function is as follows. Core subunit of the mitochondrial membrane respiratory chain NADH dehydrogenase (Complex I) that is believed to belong to the minimal assembly required for catalysis. Complex I functions in the transfer of electrons from NADH to the respiratory chain. The immediate electron acceptor for the enzyme is believed to be ubiquinone. In Lumbricus terrestris (Common earthworm), this protein is NADH-ubiquinone oxidoreductase chain 4L (ND4L).